The primary structure comprises 399 residues: CCA-adding enzyme (399 aa).

2 residues coordinate ATP: glycine 32 and arginine 35. CTP contacts are provided by glycine 32 and arginine 35. Residues aspartate 45 and aspartate 47 each contribute to the Mg(2+) site. 5 residues coordinate ATP: arginine 116, aspartate 159, arginine 162, arginine 165, and arginine 168. CTP is bound by residues arginine 116, aspartate 159, arginine 162, arginine 165, and arginine 168.

Belongs to the tRNA nucleotidyltransferase/poly(A) polymerase family. Bacterial CCA-adding enzyme type 3 subfamily. Homodimer. It depends on Mg(2+) as a cofactor.

It catalyses the reaction a tRNA precursor + 2 CTP + ATP = a tRNA with a 3' CCA end + 3 diphosphate. The catalysed reaction is a tRNA with a 3' CCA end + 2 CTP + ATP = a tRNA with a 3' CCACCA end + 3 diphosphate. Functionally, catalyzes the addition and repair of the essential 3'-terminal CCA sequence in tRNAs without using a nucleic acid template. Adds these three nucleotides in the order of C, C, and A to the tRNA nucleotide-73, using CTP and ATP as substrates and producing inorganic pyrophosphate. tRNA 3'-terminal CCA addition is required both for tRNA processing and repair. Also involved in tRNA surveillance by mediating tandem CCA addition to generate a CCACCA at the 3' terminus of unstable tRNAs. While stable tRNAs receive only 3'-terminal CCA, unstable tRNAs are marked with CCACCA and rapidly degraded. The chain is CCA-adding enzyme from Streptococcus pneumoniae serotype 19F (strain G54).